Reading from the N-terminus, the 120-residue chain is Large ribosomal subunit protein bL20 (120 aa).

The protein belongs to the bacterial ribosomal protein bL20 family.

In terms of biological role, binds directly to 23S ribosomal RNA and is necessary for the in vitro assembly process of the 50S ribosomal subunit. It is not involved in the protein synthesizing functions of that subunit. In Desulforudis audaxviator (strain MP104C), this protein is Large ribosomal subunit protein bL20.